Consider the following 294-residue polypeptide: Acetyl-coenzyme A carboxylase carboxyl transferase subunit beta (294 aa).

The CoA carboxyltransferase N-terminal domain maps to 30 to 294; the sequence is IMTKCPECKK…PGVGGEVDGE (265 aa). Cys34, Cys37, Cys53, and Cys56 together coordinate Zn(2+). The segment at 34–56 adopts a C4-type zinc-finger fold; sequence CPECKKIMYTKELQKNLMVCNYC.

Belongs to the AccD/PCCB family. As to quaternary structure, acetyl-CoA carboxylase is a heterohexamer composed of biotin carboxyl carrier protein (AccB), biotin carboxylase (AccC) and two subunits each of ACCase subunit alpha (AccA) and ACCase subunit beta (AccD). Zn(2+) is required as a cofactor.

It localises to the cytoplasm. It catalyses the reaction N(6)-carboxybiotinyl-L-lysyl-[protein] + acetyl-CoA = N(6)-biotinyl-L-lysyl-[protein] + malonyl-CoA. Its pathway is lipid metabolism; malonyl-CoA biosynthesis; malonyl-CoA from acetyl-CoA: step 1/1. Component of the acetyl coenzyme A carboxylase (ACC) complex. Biotin carboxylase (BC) catalyzes the carboxylation of biotin on its carrier protein (BCCP) and then the CO(2) group is transferred by the transcarboxylase to acetyl-CoA to form malonyl-CoA. The chain is Acetyl-coenzyme A carboxylase carboxyl transferase subunit beta from Listeria monocytogenes serovar 1/2a (strain ATCC BAA-679 / EGD-e).